Consider the following 86-residue polypeptide: Large ribosomal subunit protein bL27 (86 aa).

It belongs to the bacterial ribosomal protein bL27 family.

This Xanthomonas campestris pv. campestris (strain 8004) protein is Large ribosomal subunit protein bL27.